The sequence spans 493 residues: Serine/threonine-protein kinase 3 (493 aa).

Positions 26–277 (FDVLEKLGEG…ATQLLQHPFI (252 aa)) constitute a Protein kinase domain. ATP-binding positions include 32 to 40 (LGEGSYGSV) and lysine 55. The active-site Proton acceptor is the aspartate 145. Residue threonine 179 is modified to Phosphothreonine; by autocatalysis. A coiled-coil region spans residues 286–327 (LRDLITEAMDIKAKRHEELQRELEEEDENSEEDELDSHTMVK). 2 disordered regions span residues 303-336 (ELQR…AGTM) and 369-414 (DDEE…NCNQ). Acidic residues predominate over residues 308–320 (LEEEDENSEEDEL). Polar residues predominate over residues 325–336 (MVKTNSESAGTM). A compositionally biased stretch (acidic residues) spans 369 to 378 (DDEEEEEEED). Positions 398–410 (YFDKQDSKNKPHD) are enriched in basic and acidic residues. One can recognise an SARAH domain in the interval 439 to 486 (FDFLKNLSFEELQMRLKALDPMMEREIEDLRQRYNAKRQPILDAMDAK). Residues 444–477 (NLSFEELQMRLKALDPMMEREIEDLRQRYNAKRQ) adopt a coiled-coil conformation.

It belongs to the protein kinase superfamily. STE Ser/Thr protein kinase family. STE20 subfamily. In terms of assembly, homodimer; mediated via the coiled-coil region. Mg(2+) is required as a cofactor.

The protein localises to the cytoplasm. It localises to the nucleus. It catalyses the reaction L-seryl-[protein] + ATP = O-phospho-L-seryl-[protein] + ADP + H(+). The enzyme catalyses L-threonyl-[protein] + ATP = O-phospho-L-threonyl-[protein] + ADP + H(+). With respect to regulation, inhibited by the C-terminal non-catalytic region. Activated by caspase-cleavage. Full activation also requires homodimerization and autophosphorylation of Thr-179. Functionally, stress-activated, pro-apoptotic kinase which, following caspase-cleavage, enters the nucleus and induces chromatin condensation followed by internucleosomal DNA fragmentation. Key component of the Hippo signaling pathway which plays a pivotal role in organ size control and tumor suppression by restricting proliferation and promoting apoptosis. The core of this pathway is composed of a kinase cascade wherein stk3/mst2 and stk4/mst1, in complex with its regulatory protein sav1, phosphorylates and activates lats1/2 in complex with its regulatory protein mob1, which in turn phosphorylates and inactivates yap1 oncoprotein and wwtr1/taz. Phosphorylation of yap1 by lats2 inhibits its translocation into the nucleus to regulate cellular genes important for cell proliferation, cell death, and cell migration. The polypeptide is Serine/threonine-protein kinase 3 (stk3) (Xenopus laevis (African clawed frog)).